The chain runs to 747 residues: MTLITRVLNGNLPLRLSTLKAARQLQCGYSSHAKYAEHKPIERIRNIGISAHIDSGKTTLTERILFYTGRIAEMHEVRGKDNVGATMDSMELERQRGITIQSAATYTVWKDVNINIIDTPGHVDFTVEVERALRVLDGAVLVLCAVGGVQSQTLTVNRQMKRYNVPCLAFINKLDRMGSNPYRVLSQMRSKLNHNAAFIQLPIGVENNCKGIVDLVQERAIYFEGEHGINLRLDEIPQDMRVESQERRQELIEHLSNADETLGELFLEEKPFTEADIKAALRRTCIKRTFTPVLVGTALKNKGVQPLLDAVVDYLPNPGEVENLAYIEQEGQEKQQIVLNPARDGKDPFMGLAFKLEAGRFGQLTYLRCYQGALRKGDNIYNARNHKKVRIARLVRLHSNQMEDVNEVFAGDIFALFGVDCASGDTFTTNPKNNMSMESIFVPEPVVSMAIKPNNTKDRDNFSKAIARFTKEDPTFHFKFDNDIKETLVSGMGELHLEIYAQRMEREYGCPVTLGKPKVAFRETLVGPCEFDYLHKKQSGGSGQYARIIGVMEPLPPSQNTLLEFVDETVGTNVPKQFVPGVEKGYREMCERGMLSGHKLSGIRFRLQDGGHHIVDSSELAFMLAAHGAVKEVFQNGAWQILEPIMLVEVTAPEEFQGAVMGHLSKRHGIITGTEGTEGWFTVYAEVPLNDMFGYASELRSSTQGKGEFTMEYSRYSPCLPDVQEQIVRQYQESQGLGQPEKKKKKN.

Residues 1 to 32 (MTLITRVLNGNLPLRLSTLKAARQLQCGYSSH) constitute a mitochondrion transit peptide. Positions 42–319 (ERIRNIGISA…AVVDYLPNPG (278 aa)) constitute a tr-type G domain. Residues 51–58 (AHIDSGKT), 118–122 (DTPGH), and 172–175 (NKLD) each bind GTP.

It belongs to the TRAFAC class translation factor GTPase superfamily. Classic translation factor GTPase family. EF-G/EF-2 subfamily.

The protein localises to the mitochondrion. The protein operates within protein biosynthesis; polypeptide chain elongation. In terms of biological role, mitochondrial GTPase that catalyzes the GTP-dependent ribosomal translocation step during translation elongation. During this step, the ribosome changes from the pre-translocational (PRE) to the post-translocational (POST) state as the newly formed A-site-bound peptidyl-tRNA and P-site-bound deacylated tRNA move to the P and E sites, respectively. Catalyzes the coordinated movement of the two tRNA molecules, the mRNA and conformational changes in the ribosome. Essential during development as it acts as a retrograde signal from mitochondria to the nucleus to slow down cell proliferation if mitochondrial energy output is low. The protein is Elongation factor G, mitochondrial of Drosophila mojavensis (Fruit fly).